A 437-amino-acid chain; its full sequence is Epsilon-sarcoglycan (437 aa).

Over Met1–Phe317 the chain is Extracellular. An N-linked (GlcNAc...) asparagine glycan is attached at Asn200. The chain crosses the membrane as a helical span at residues Leu318–Ile338. Over Met339–Pro437 the chain is Cytoplasmic.

This sequence belongs to the sarcoglycan alpha/epsilon family. N-glycosylated. Post-translationally, ubiquitinated, leading to its degradation by the proteasome.

The protein localises to the cell membrane. It localises to the sarcolemma. Its subcellular location is the cytoplasm. It is found in the cytoskeleton. The protein resides in the cell projection. The protein localises to the dendrite. It localises to the golgi apparatus. In terms of biological role, component of the sarcoglycan complex, a subcomplex of the dystrophin-glycoprotein complex which forms a link between the F-actin cytoskeleton and the extracellular matrix. In Pongo abelii (Sumatran orangutan), this protein is Epsilon-sarcoglycan.